The primary structure comprises 364 residues: Dimethylsulfoniopropionate demethylase DmdA (364 aa).

It belongs to the GcvT family. DmdA subfamily.

The enzyme catalyses S,S-dimethyl-beta-propiothetin + (6S)-5,6,7,8-tetrahydrofolate = 3-(methylsulfanyl)propanoate + (6S)-5-methyl-5,6,7,8-tetrahydrofolate + H(+). Functionally, involved in the assimilation of dimethylsulphoniopropionate (DMSP), an important compound in the fixation of carbon in marine phytoplankton, by mediating demethylation of dimethylsulfoniopropionate (DMSP) to methyl-mercaptopropionate (MMPA). The intracellular concentration of DMSP is estimated to be 70 mM. The protein is Dimethylsulfoniopropionate demethylase DmdA of Ruegeria pomeroyi (strain ATCC 700808 / DSM 15171 / DSS-3) (Silicibacter pomeroyi).